The chain runs to 197 residues: MAREKIVVAGGSTKSWKLLLGLRVFAFMATLAAAIVMSLNKETKTLVVATIGTLPIKATLTAKFQDTPAFVFFVIANVMVSFHNLLMIVLQIFSRKLEYKGVRLLSIAILDMLNATLVSAAANAAVFVAELGKNGNKHAKWNKVCDRFATYCDHGAGALIAAFAGVILMLLVSSVSISRLLINSKHLSTTATTTAVV.

Ala2 is modified (N-acetylalanine). The Cytoplasmic segment spans residues 2-17 (AREKIVVAGGSTKSWK). A helical membrane pass occupies residues 18–38 (LLLGLRVFAFMATLAAAIVMS). At 39–69 (LNKETKTLVVATIGTLPIKATLTAKFQDTPA) the chain is on the extracellular side. Residues 70–90 (FVFFVIANVMVSFHNLLMIVL) traverse the membrane as a helical segment. Residues 91–106 (QIFSRKLEYKGVRLLS) lie on the Cytoplasmic side of the membrane. The chain crosses the membrane as a helical span at residues 107–127 (IAILDMLNATLVSAAANAAVF). Topologically, residues 128 to 156 (VAELGKNGNKHAKWNKVCDRFATYCDHGA) are extracellular. A helical transmembrane segment spans residues 157-177 (GALIAAFAGVILMLLVSSVSI). The Cytoplasmic segment spans residues 178–197 (SRLLINSKHLSTTATTTAVV).

This sequence belongs to the Casparian strip membrane proteins (CASP) family. As to quaternary structure, homodimer and heterodimers.

It localises to the cell membrane. The polypeptide is CASP-like protein 1B2 (Arabidopsis lyrata subsp. lyrata (Lyre-leaved rock-cress)).